Here is a 326-residue protein sequence, read N- to C-terminus: 3-oxopimeloyl-[acyl-carrier-protein] synthase (326 aa).

Residues cysteine 115 and histidine 253 contribute to the active site. Residues 254 to 258 (QANIR) are ACP-binding. Residue asparagine 283 is part of the active site.

Belongs to the thiolase-like superfamily. BioZ family.

It catalyses the reaction malonyl-[ACP] + an acyl-CoA + H(+) = a 3-oxoacyl-[ACP] + CO2 + CoA. It carries out the reaction glutaryl-CoA + malonyl-[ACP] + H(+) = 3-oxo-6-carboxyhexanoyl-[ACP] + CO2 + CoA. It functions in the pathway cofactor biosynthesis; biotin biosynthesis. Functionally, involved in the formation of the biotin precursor pimeloyl-ACP. Catalyzes the condensation of glutaryl-CoA, an intermediate in lysine degradation, with malonyl-ACP to produce 3-oxopimeloyl-ACP. The polypeptide is 3-oxopimeloyl-[acyl-carrier-protein] synthase (Brucella abortus (strain 2308)).